We begin with the raw amino-acid sequence, 846 residues long: Vinculin (846 aa).

The interaction with TLN stretch occupies residues 1-257 (MPVKFHTKTL…VLQLTTTFEE (257 aa)). A coiled-coil region spans residues 315 to 370 (RAKLLAAADELDQILKELEELQAKGLGDSRQARALAHAAAVKLQELEQEIRKALAE). Residues 617 to 646 (WVPPRPPLPELEEEEEPPELPPPPEDPASL) are disordered.

Belongs to the vinculin/alpha-catenin family. As to quaternary structure, monomer. Interacts with TLN (talin); the interaction facilitates VIN1 binding to F-actin. Expressed in epithelial tissues, specifically the pinacoderm (outer epithelium) and choanoderm (feeding epithelium) (at protein level). Also detected in migratory cells of the mesohyl (at protein level).

It localises to the cytoplasm. The protein localises to the cell cortex. Its subcellular location is the cell projection. It is found in the filopodium. The protein resides in the cytoskeleton. Actin filament (F-actin)-binding protein which may play a role in cell-cell adhesion. In Oscarella pearsei (Sponge), this protein is Vinculin.